Here is a 1701-residue protein sequence, read N- to C-terminus: Coiled-coil domain-containing protein 180 (1701 aa).

The interval 1–35 (MRGGENRPPARVQSSSEELELRHQSLDAFPGRRLP) is disordered. Residues 171-198 (QRQAEHKRKSYESALASFQEEIAQVGKE) adopt a coiled-coil conformation. Disordered stretches follow at residues 657 to 808 (EKPS…DKEE), 1272 to 1291 (HHCDKDPSQTGRGAWACGSR), and 1319 to 1354 (GFKRHRCQPENSGKKAVPSASATSAGSFTPHPKPNK). The span at 661–671 (QKRVKKLRKKQ) shows a compositional bias: basic residues. Positions 672–682 (GSKEDMTRSEE) are enriched in basic and acidic residues. The segment covering 683-692 (SISSGTSTAR) has biased composition (polar residues). Acidic residues predominate over residues 696-705 (EVEEENDQEM). Positions 755–766 (ENVKGQGEKKEE) are enriched in basic and acidic residues. The stretch at 757-804 (VKGQGEKKEESEEEDEKEEEEEEEKLEEEKEEKEAQEEQESLSVGEEE) forms a coiled coil. Residues 767–808 (SEEEDEKEEEEEEEKLEEEKEEKEAQEEQESLSVGEEEDKEE) show a composition bias toward acidic residues.

In Homo sapiens (Human), this protein is Coiled-coil domain-containing protein 180 (CCDC180).